Reading from the N-terminus, the 274-residue chain is Large ribosomal subunit protein uL2 (274 aa).

The disordered stretch occupies residues 223–274 (VAMNPVDHPHGGGEGRTGEGRHAVDPWGNLTKGYRTRNNKRTQSMIVSRRKK). Positions 229–246 (DHPHGGGEGRTGEGRHAV) are enriched in basic and acidic residues.

It belongs to the universal ribosomal protein uL2 family. Part of the 50S ribosomal subunit. Forms a bridge to the 30S subunit in the 70S ribosome.

Functionally, one of the primary rRNA binding proteins. Required for association of the 30S and 50S subunits to form the 70S ribosome, for tRNA binding and peptide bond formation. It has been suggested to have peptidyltransferase activity; this is somewhat controversial. Makes several contacts with the 16S rRNA in the 70S ribosome. This chain is Large ribosomal subunit protein uL2, found in Verminephrobacter eiseniae (strain EF01-2).